The following is a 411-amino-acid chain: Thyroxine-binding globulin (411 aa).

Positions 1–15 (MPLFSLVLLILGLHC) are cleaved as a signal peptide. N-linked (GlcNAc...) asparagine glycans are attached at residues N34, N97, N163, and N251. Thyroxine contacts are provided by N291 and K394.

It belongs to the serpin family. In terms of tissue distribution, expressed by the liver and secreted in plasma.

It is found in the secreted. Major thyroid hormone transport protein in serum. The chain is Thyroxine-binding globulin (SERPINA7) from Bos taurus (Bovine).